A 348-amino-acid chain; its full sequence is Mitogen-activated protein kinase kinase 5 (348 aa).

Disordered regions lie at residues 1 to 26 (MKPI…DLSL) and 35 to 54 (LAVP…PASS). Ser6 carries the post-translational modification Phosphoserine; by ASK7. The Protein kinase domain occupies 70–325 (LERVNRIGSG…AQQLLQHPFI (256 aa)). ATP is bound by residues 76–84 (IGSGAGGTV) and Lys99. Catalysis depends on Asp187, which acts as the Proton acceptor. Thr215 is subject to Phosphothreonine. The residue at position 221 (Ser221) is a Phosphoserine; by ASK7. Ser221 bears the Phosphoserine mark. Phosphothreonine; by ASK7 is present on Thr225. Arg313 bears the ADP-ribosylarginine; by HopF2 mark.

Belongs to the protein kinase superfamily. STE Ser/Thr protein kinase family. MAP kinase kinase subfamily. In terms of assembly, interacts with P.syringae type III effector HopF2. Interacts with BZR1. Interacts with MPK6 and MPK3. Interacts with RACK1A, RACK1B and RACK1C. Interacts with MAPKKK5 mainly in the cytosol. Binds to BASL. Interacts with MAPKKK20. Phosphorylation at Thr-215 and Ser-221 by MAP kinase kinase kinases positively regulates kinase activity. Phosphorylated by MAPKKK5 and MAPKKK20 in response to abscisic acid (ABA). In terms of processing, ADP-ribosylation at Arg-313 by P.syringae type III effector HopF2 reduces the ability of the protein to phosphorylate downstream MPK6. In terms of tissue distribution, expressed higher in stems and leaves than in flowers and roots.

The enzyme catalyses L-seryl-[protein] + ATP = O-phospho-L-seryl-[protein] + ADP + H(+). It catalyses the reaction L-threonyl-[protein] + ATP = O-phospho-L-threonyl-[protein] + ADP + H(+). It carries out the reaction L-tyrosyl-[protein] + ATP = O-phospho-L-tyrosyl-[protein] + ADP + H(+). With respect to regulation, activated through serine and threonine phosphorylation by MEKK1 and MAPKKK20 in response to abscisic acid (ABA). Inhibited through phosphorylation by GSK3/Shaggy-like kinase ASKs. Inhibited through ADP-Ribosylation by P.syringae HopF2. Activated after high light stress. In terms of biological role, mitogen-activated protein kinase kinase (MAPKK) which regulates abscisic acid (ABA) responses in a MAPKKK20-MKK5-MPK6 cascade involved in root growth (e.g. root cell division and elongation) and stomatal response, probably via MAPK6 activation by protein phosphorylation. Involved in the second phase of hydrogen peroxide generation during hypersensitive response-like cell death. Involved in the innate immune MAP kinase signaling cascade (MEKK1, MKK4/MKK5 and MPK3/MPK6) downstream of bacterial flagellin receptor FLS2. Activates by phosphorylation the downstream MPK3 and MPK6. YDA-MKK4/MKK5-MPK3/MPK6 module regulates stomatal cell fate before the guard mother cell (GMC) is specified. This MAPK cascade also functions downstream of the ER receptor in regulating coordinated local cell proliferation, which shapes the morphology of plant organs. MKK4 and MKK5 participate in the regulation of floral organ abscission. Target of the Pseudomonas syringae type III effector HopF2, that inhibits the activation of the downstream MPK6 and PAMP-triggered immunity. Plays a critical role in high light stress tolerance by the mediation of the Cu/Zn SODs CSD1 and CSD2 gene expression. Phosphorylates BZR1 in vitro. This chain is Mitogen-activated protein kinase kinase 5, found in Arabidopsis thaliana (Mouse-ear cress).